The chain runs to 304 residues: RNA polymerase II holoenzyme cyclin-like subunit (304 aa).

The Cyclin N-terminal domain occupies 43–174 (TIHDSKANKQ…LIEELQSYLI (132 aa)).

This sequence belongs to the cyclin family. Cyclin C subfamily. In terms of assembly, component of the SRB8-11 complex, a regulatory module of the Mediator complex.

The protein localises to the nucleus. Functionally, component of the SRB8-11 complex. The SRB8-11 complex is a regulatory module of the Mediator complex which is itself involved in regulation of basal and activated RNA polymerase II-dependent transcription. The SRB8-11 complex may be involved in the transcriptional repression of a subset of genes regulated by Mediator. It may inhibit the association of the Mediator complex with RNA polymerase II to form the holoenzyme complex. The SRB8-11 complex phosphorylates the C-terminal domain (CTD) of the largest subunit of RNA polymerase II. This chain is RNA polymerase II holoenzyme cyclin-like subunit (SSN8), found in Kluyveromyces lactis (strain ATCC 8585 / CBS 2359 / DSM 70799 / NBRC 1267 / NRRL Y-1140 / WM37) (Yeast).